The primary structure comprises 21 residues: Fibrinogen beta chain (21 aa).

Q1 bears the Pyrrolidone carboxylic acid mark. Residues 1-11 (QFPTDYDEGED) show a composition bias toward acidic residues. The segment at 1–21 (QFPTDYDEGEDDRPKSGLGAR) is disordered. O-linked (GalNAc...) threonine glycosylation is present at T4. At Y6 the chain carries Sulfotyrosine.

As to quaternary structure, heterohexamer; disulfide linked. Contains 2 sets of 3 non-identical chains (alpha, beta and gamma). The 2 heterotrimers are in head to head conformation with the N-termini in a small central domain. Post-translationally, conversion of fibrinogen to fibrin is triggered by thrombin, which cleaves fibrinopeptides A and B from alpha and beta chains, and thus exposes the N-terminal polymerization sites responsible for the formation of the soft clot.

It localises to the secreted. In terms of biological role, cleaved by the protease thrombin to yield monomers which, together with fibrinogen alpha (FGA) and fibrinogen gamma (FGG), polymerize to form an insoluble fibrin matrix. Fibrin has a major function in hemostasis as one of the primary components of blood clots. In addition, functions during the early stages of wound repair to stabilize the lesion and guide cell migration during re-epithelialization. Was originally thought to be essential for platelet aggregation, based on in vitro studies using anticoagulated blood. However subsequent studies have shown that it is not absolutely required for thrombus formation in vivo. Enhances expression of SELP in activated platelets. Maternal fibrinogen is essential for successful pregnancy. Fibrin deposition is also associated with infection, where it protects against IFNG-mediated hemorrhage. May also facilitate the antibacterial immune response via both innate and T-cell mediated pathways. The sequence is that of Fibrinogen beta chain (FGB) from Syncerus caffer (African buffalo).